The sequence spans 406 residues: Protease ElaD (406 aa).

The active site involves histidine 234. The active-site Nucleophile is cysteine 316.

It belongs to the peptidase C79 family.

In terms of biological role, protease that can act as an efficient and specific deubiquitinating enzyme in vitro. Does not possess desumoylating and deneddylating activities. The physiological substrate is unknown. The chain is Protease ElaD (elaD) from Escherichia coli O139:H28 (strain E24377A / ETEC).